A 518-amino-acid chain; its full sequence is Arrestin-related trafficking adapter 10 (518 aa).

Residue Lys118 forms a Glycyl lysine isopeptide (Lys-Gly) (interchain with G-Cter in ubiquitin) linkage.

The protein belongs to the ART10 family. As to quaternary structure, interacts with RSP5. In terms of processing, ubiquitinated by RSP5.

Its subcellular location is the cytoplasm. Its function is as follows. May regulate endocytosis by recruiting RSP5 ubiquitin ligase activity to specific plasma membrane proteins in response to extracellular stimuli. This chain is Arrestin-related trafficking adapter 10 (ART10), found in Saccharomyces cerevisiae (strain ATCC 204508 / S288c) (Baker's yeast).